We begin with the raw amino-acid sequence, 138 residues long: ATP synthase epsilon chain (138 aa).

Belongs to the ATPase epsilon chain family. In terms of assembly, F-type ATPases have 2 components, CF(1) - the catalytic core - and CF(0) - the membrane proton channel. CF(1) has five subunits: alpha(3), beta(3), gamma(1), delta(1), epsilon(1). CF(0) has three main subunits: a, b and c.

It localises to the cell inner membrane. Functionally, produces ATP from ADP in the presence of a proton gradient across the membrane. This chain is ATP synthase epsilon chain, found in Idiomarina loihiensis (strain ATCC BAA-735 / DSM 15497 / L2-TR).